Here is a 328-residue protein sequence, read N- to C-terminus: Naphthalene 1,2-dioxygenase/salicylate 5-hydroxylase systems, ferredoxin--NAD(P)(+), reductase component (328 aa).

The 2Fe-2S ferredoxin-type domain maps to 1–89 (MELVVEPLNL…DCTIEIPESD (89 aa)). Positions 35, 40, 43, and 73 each coordinate [2Fe-2S] cluster. Positions 96 to 193 (ARIVKGTVTA…SGPLGTAYLR (98 aa)) constitute an FAD-binding FR-type domain.

The protein belongs to the bacterial ring-hydroxylating dioxygenase ferredoxin reductase family. In terms of assembly, ferredoxin reductase NagAa belongs to both the salicylate 5-hydroxylase (S5H) and the naphthalene 1,2-dioxygenase (NDO) multicomponent enzyme systems. The NDO multicomponent enzyme system is composed of an electron transfer component and a dioxygenase component (iron sulfur protein (ISP)). The electron transfer component is composed of a ferredoxin reductase (NagAa) and a ferredoxin (NagAb), and the dioxygenase component is formed by a large alpha subunit (NagAc) and a small beta subunit (NagAd). The S5H multicomponent enzyme system is composed of an electron transfer component and a monooxygenase component. The electron transfer component is comprised of a ferredoxin reductase (NagAa) and a ferredoxin (NagAb), and the monooxygenase component is formed by a large subunit (NagG) and a small subunit (NagH). [2Fe-2S] cluster serves as cofactor. FAD is required as a cofactor.

It carries out the reaction 2 reduced [2Fe-2S]-[ferredoxin] + NAD(+) + H(+) = 2 oxidized [2Fe-2S]-[ferredoxin] + NADH. The catalysed reaction is 2 reduced [2Fe-2S]-[ferredoxin] + NADP(+) + H(+) = 2 oxidized [2Fe-2S]-[ferredoxin] + NADPH. It functions in the pathway aromatic compound metabolism; naphthalene degradation. Functionally, component of two multicomponent enzyme systems which are involved in the catabolism of naphthalene. Plays a role as an electron transfer component for both salicylate 5-hydroxylase (S5H) and naphthalene 1,2-dioxygenase (NDO) systems, by transferring electrons from NAD(P)H to the oxygenase component via the ferredoxin NagAb. The electron transport chain from the two systems can use both NADH and NADPH as electron donors at approximately similar rates. The sequence is that of Naphthalene 1,2-dioxygenase/salicylate 5-hydroxylase systems, ferredoxin--NAD(P)(+), reductase component from Ralstonia sp.